The following is a 149-amino-acid chain: MKKITVDLNGKDLRIGIVLSRFNSNIGEGLLKACVDQLHKLGVADDDITLATVPGALEAPAILLQMADSEQFDGLIALGAVIRGETYHFEVVSNESARGISDVQLSTGIPIANAILTTENDEQAEARVAVKGAEAADVVVEMINLLKQL.

Residues phenylalanine 22, 56 to 58 (ALE), and 80 to 82 (AVI) each bind 5-amino-6-(D-ribitylamino)uracil. 85–86 (ET) provides a ligand contact to (2S)-2-hydroxy-3-oxobutyl phosphate. Catalysis depends on histidine 88, which acts as the Proton donor. Asparagine 113 contributes to the 5-amino-6-(D-ribitylamino)uracil binding site. A (2S)-2-hydroxy-3-oxobutyl phosphate-binding site is contributed by arginine 127.

Belongs to the DMRL synthase family.

It catalyses the reaction (2S)-2-hydroxy-3-oxobutyl phosphate + 5-amino-6-(D-ribitylamino)uracil = 6,7-dimethyl-8-(1-D-ribityl)lumazine + phosphate + 2 H2O + H(+). The protein operates within cofactor biosynthesis; riboflavin biosynthesis; riboflavin from 2-hydroxy-3-oxobutyl phosphate and 5-amino-6-(D-ribitylamino)uracil: step 1/2. In terms of biological role, catalyzes the formation of 6,7-dimethyl-8-ribityllumazine by condensation of 5-amino-6-(D-ribitylamino)uracil with 3,4-dihydroxy-2-butanone 4-phosphate. This is the penultimate step in the biosynthesis of riboflavin. This is 6,7-dimethyl-8-ribityllumazine synthase from Methylobacillus flagellatus (strain ATCC 51484 / DSM 6875 / VKM B-1610 / KT).